The sequence spans 45 residues: MQVLSSLKSAKNRHPDCQVVRRRGRVFVINKTDGRFKAVQGKKKK.

Belongs to the bacterial ribosomal protein bL36 family.

This Psychrobacter sp. (strain PRwf-1) protein is Large ribosomal subunit protein bL36.